The following is a 172-amino-acid chain: Protein 3 (172 aa).

The chain is Protein 3 (3) from Northern cereal mosaic virus (NCMV).